Consider the following 1639-residue polypeptide: RIMS-binding protein 3A (1639 aa).

3 disordered regions span residues 1–22 (MAKDSPSPLGASPKKPGCSSPA), 215–240 (GSPDPQAVHSLEEPLPQTSSGSCHAP), and 295–364 (SLDS…LTPS). The stretch at 21–143 (PAAAVLENQR…ELQRQLAEEL (123 aa)) forms a coiled coil. The segment covering 326–339 (SPPPSPLPPPPPPS) has biased composition (pro residues). 2 coiled-coil regions span residues 409–442 (QADEKVKRLKVKRAELTGLARRLADRARKLQETN) and 480–619 (LAKD…AEEN). Residues 697 to 811 (CRPGHPPEQP…DRDTASEVDD (115 aa)) are disordered. Composition is skewed to polar residues over residues 707–718 (WETSQMPESQVK) and 761–775 (SVPQVSETVPASQPL). Over residues 776–790 (SKKTSSQSNSSSEGS) the composition is skewed to low complexity. Residues 832–899 (PKLKIFMAQY…PSNFVEQIPD (68 aa)) form the SH3 1 domain. Fibronectin type-III domains are found at residues 995–1083 (APMQ…TLLA) and 1088–1184 (PPLD…IPED). Disordered stretches follow at residues 1251 to 1273 (PRRQSPVSNLGSEGECPSSGAGS) and 1292 to 1330 (QKSPQNHRPPSVSDQPGEKENCSQHMGTSKSPAPGFIHL). Positions 1293–1305 (KSPQNHRPPSVSD) are enriched in polar residues. 2 SH3 domains span residues 1452 to 1520 (TPAR…EMEV) and 1569 to 1636 (WTPK…HMSL).

It belongs to the RIMBP family. As to quaternary structure, interacts with LRGUK (via guanylate kinase-like domain). Interacts (via C-terminus) with HOOK1 (via coiled-coil region).

The protein resides in the cytoplasm. It is found in the cytoskeleton. Probable component of the manchette, a microtubule-based structure which plays a key role in sperm head morphogenesis during late stages of sperm development. This is RIMS-binding protein 3A (RIMBP3) from Homo sapiens (Human).